The primary structure comprises 179 residues: ATP synthase subunit delta (179 aa).

The protein belongs to the ATPase delta chain family. F-type ATPases have 2 components, F(1) - the catalytic core - and F(0) - the membrane proton channel. F(1) has five subunits: alpha(3), beta(3), gamma(1), delta(1), epsilon(1). F(0) has three main subunits: a(1), b(2) and c(10-14). The alpha and beta chains form an alternating ring which encloses part of the gamma chain. F(1) is attached to F(0) by a central stalk formed by the gamma and epsilon chains, while a peripheral stalk is formed by the delta and b chains.

It is found in the cell membrane. In terms of biological role, f(1)F(0) ATP synthase produces ATP from ADP in the presence of a proton or sodium gradient. F-type ATPases consist of two structural domains, F(1) containing the extramembraneous catalytic core and F(0) containing the membrane proton channel, linked together by a central stalk and a peripheral stalk. During catalysis, ATP synthesis in the catalytic domain of F(1) is coupled via a rotary mechanism of the central stalk subunits to proton translocation. Its function is as follows. This protein is part of the stalk that links CF(0) to CF(1). It either transmits conformational changes from CF(0) to CF(1) or is implicated in proton conduction. This is ATP synthase subunit delta from Mycoplasmopsis pulmonis (strain UAB CTIP) (Mycoplasma pulmonis).